A 264-amino-acid polypeptide reads, in one-letter code: Major prion protein (264 aa).

The first 24 residues, 1 to 24 (MVKRHIGSWILVLFVVMWSDVGLC), serve as a signal peptide directing secretion. The interval 25 to 241 (KKRPKPGGGW…ESQAYYQRGA (217 aa)) is interaction with GRB2, ERI3 and SYN1. The disordered stretch occupies residues 27-119 (RPKPGGGWNT…WNKPSKPKTN (93 aa)). 6 repeat units span residues 54–62 (SQGGGGWGQ), 63–70 (PHGGGWGQ), 71–78 (PHGGGWGQ), 79–86 (PHGGGWGQ), 87–94 (PHGGGWGQ), and 95–103 (PHGGGGWGQ). A 6 X 8 AA tandem repeats of P-H-G-G-G-W-G-Q region spans residues 54–103 (SQGGGGWGQPHGGGWGQPHGGGWGQPHGGGWGQPHGGGWGQPHGGGGWGQ). Residues 55–105 (QGGGGWGQPHGGGWGQPHGGGWGQPHGGGWGQPHGGGWGQPHGGGGWGQGG) are compositionally biased toward gly residues. Residues H72, G73, G74, H80, G81, G82, H88, G89, G90, H96, G98, and G99 each coordinate Cu(2+). C190 and C225 are disulfide-bonded. Residues N192 and N208 are each glycosylated (N-linked (GlcNAc...) asparagine). A241 carries the GPI-anchor amidated alanine lipid modification. The propeptide at 242–264 (SVILFSSPPVILLISLLIFLIVG) is removed in mature form.

It belongs to the prion family. As to quaternary structure, monomer and homodimer. Has a tendency to aggregate into amyloid fibrils containing a cross-beta spine, formed by a steric zipper of superposed beta-strands. Soluble oligomers may represent an intermediate stage on the path to fibril formation. Copper binding may promote oligomerization. Interacts with GRB2, APP, ERI3/PRNPIP and SYN1. Mislocalized cytosolically exposed PrP interacts with MGRN1; this interaction alters MGRN1 subcellular location and causes lysosomal enlargement. Interacts with KIAA1191.

The protein localises to the cell membrane. Its subcellular location is the golgi apparatus. In terms of biological role, its primary physiological function is unclear. Has cytoprotective activity against internal or environmental stresses. May play a role in neuronal development and synaptic plasticity. May be required for neuronal myelin sheath maintenance. May play a role in iron uptake and iron homeostasis. Soluble oligomers are toxic to cultured neuroblastoma cells and induce apoptosis (in vitro). Association with GPC1 (via its heparan sulfate chains) targets PRNP to lipid rafts. Also provides Cu(2+) or Zn(2+) for the ascorbate-mediated GPC1 deaminase degradation of its heparan sulfate side chains. This is Major prion protein (PRNP) from Bubalus bubalis (Domestic water buffalo).